The primary structure comprises 701 residues: DNA ligase (701 aa).

The tract at residues 1-21 (MSAKSTPDAGPQEQATEAEAE) is disordered. Residues 50–54 (DADFD), 100–101 (SL), and Glu-130 contribute to the NAD(+) site. Residue Lys-132 is the N6-AMP-lysine intermediate of the active site. Residues Arg-153, Glu-193, Lys-309, and Lys-333 each contribute to the NAD(+) site. Zn(2+) is bound by residues Cys-427, Cys-430, Cys-446, and Cys-452. The BRCT domain maps to 616-701 (SIARTLEGLS…LENGPQAPEG (86 aa)).

Belongs to the NAD-dependent DNA ligase family. LigA subfamily. Mg(2+) serves as cofactor. It depends on Mn(2+) as a cofactor.

It catalyses the reaction NAD(+) + (deoxyribonucleotide)n-3'-hydroxyl + 5'-phospho-(deoxyribonucleotide)m = (deoxyribonucleotide)n+m + AMP + beta-nicotinamide D-nucleotide.. In terms of biological role, DNA ligase that catalyzes the formation of phosphodiester linkages between 5'-phosphoryl and 3'-hydroxyl groups in double-stranded DNA using NAD as a coenzyme and as the energy source for the reaction. It is essential for DNA replication and repair of damaged DNA. The protein is DNA ligase of Mycobacterium sp. (strain KMS).